The chain runs to 336 residues: Oxaloacetate decarboxylase (336 aa).

The Pyruvate carboxyltransferase domain maps to 10–258; that stretch reads PIVLDTTVRD…LAAVDLDRIF (249 aa). Mn(2+) contacts are provided by Asp19, His197, and His199.

Belongs to the 4-hydroxy-2-oxovalerate aldolase family. As to quaternary structure, homodimer. A divalent metal cation serves as cofactor.

The enzyme catalyses oxaloacetate + H(+) = pyruvate + CO2. Its activity is regulated as follows. Activity is abolished upon incubation with Chelex and EDTA. Exhibits oxaloacetate decarboxylase activity. Lacks any detectable aldolase activity with 4-hydroxy-2-oxopentanoate (HOPA), 4-hydroxy-2-oxohexanoate (HOHA) or other 4-hydroxy-2-oxoacids. The polypeptide is Oxaloacetate decarboxylase (Mycobacterium tuberculosis (strain ATCC 25618 / H37Rv)).